The sequence spans 119 residues: Immunoglobulin heavy variable 3-49 (119 aa).

The signal sequence occupies residues Met-1 to Cys-19. A framework-1 region spans residues Glu-20–Ser-44. An Ig-like domain is found at Glu-20–Arg-119. A disulfide bridge connects residues Cys-41 and Cys-117. Residues Gly-45 to Ala-52 are complementarity-determining-1. A framework-2 region spans residues Met-53–Phe-69. A complementarity-determining-2 region spans residues Ile-70–Thr-79. Positions Glu-80 to Cys-117 are framework-3. Residues Thr-118 to Arg-119 form a complementarity-determining-3 region.

As to quaternary structure, immunoglobulins are composed of two identical heavy chains and two identical light chains; disulfide-linked.

The protein localises to the secreted. It localises to the cell membrane. In terms of biological role, v region of the variable domain of immunoglobulin heavy chains that participates in the antigen recognition. Immunoglobulins, also known as antibodies, are membrane-bound or secreted glycoproteins produced by B lymphocytes. In the recognition phase of humoral immunity, the membrane-bound immunoglobulins serve as receptors which, upon binding of a specific antigen, trigger the clonal expansion and differentiation of B lymphocytes into immunoglobulins-secreting plasma cells. Secreted immunoglobulins mediate the effector phase of humoral immunity, which results in the elimination of bound antigens. The antigen binding site is formed by the variable domain of one heavy chain, together with that of its associated light chain. Thus, each immunoglobulin has two antigen binding sites with remarkable affinity for a particular antigen. The variable domains are assembled by a process called V-(D)-J rearrangement and can then be subjected to somatic hypermutations which, after exposure to antigen and selection, allow affinity maturation for a particular antigen. This is Immunoglobulin heavy variable 3-49 from Homo sapiens (Human).